A 505-amino-acid polypeptide reads, in one-letter code: RNA-splicing ligase RtcB homolog (505 aa).

Mn(2+) is bound by residues aspartate 119, cysteine 122, histidine 227, histidine 259, and histidine 353. 226–230 (NHYAE) contributes to the GMP binding site. GMP contacts are provided by residues 353-354 (HN), 402-405 (GGTM), serine 409, 428-431 (HGAG), and lysine 504. The active-site GMP-histidine intermediate is histidine 428.

Belongs to the RtcB family. As to quaternary structure, catalytic component of the tRNA-splicing ligase complex. The cofactor is Mn(2+).

The protein resides in the nucleus. The protein localises to the cytoplasm. It carries out the reaction a 3'-end 3'-phospho-ribonucleotide-RNA + a 5'-end dephospho-ribonucleoside-RNA + GTP = a ribonucleotidyl-ribonucleotide-RNA + GMP + diphosphate. It catalyses the reaction a 3'-end 2',3'-cyclophospho-ribonucleotide-RNA + a 5'-end dephospho-ribonucleoside-RNA + GTP + H2O = a ribonucleotidyl-ribonucleotide-RNA + GMP + diphosphate + H(+). Its function is as follows. Catalytic subunit of the tRNA-splicing ligase complex that acts by directly joining spliced tRNA halves to mature-sized tRNAs by incorporating the precursor-derived splice junction phosphate into the mature tRNA as a canonical 3',5'-phosphodiester. May act as an RNA ligase with broad substrate specificity, and may function toward other RNAs. This is RNA-splicing ligase RtcB homolog from Danio rerio (Zebrafish).